The following is a 390-amino-acid chain: Cell division protein FtsZ (390 aa).

Residues Gly21–Asn25, Gly108–Gly110, Glu139, Arg143, and Asp187 each bind GTP. The segment at Phe315–Arg390 is disordered. A compositionally biased stretch (polar residues) spans Ser326 to Ser360. Residues Val361–Arg384 are compositionally biased toward basic and acidic residues.

It belongs to the FtsZ family. As to quaternary structure, homodimer. Polymerizes to form a dynamic ring structure in a strictly GTP-dependent manner. Interacts directly with several other division proteins.

It is found in the cytoplasm. In terms of biological role, essential cell division protein that forms a contractile ring structure (Z ring) at the future cell division site. The regulation of the ring assembly controls the timing and the location of cell division. One of the functions of the FtsZ ring is to recruit other cell division proteins to the septum to produce a new cell wall between the dividing cells. Binds GTP and shows GTPase activity. This is Cell division protein FtsZ from Staphylococcus aureus (strain NCTC 8325 / PS 47).